The chain runs to 62 residues: UPF0434 protein RHECIAT_CH0004260 (62 aa).

Belongs to the UPF0434 family.

The polypeptide is UPF0434 protein RHECIAT_CH0004260 (Rhizobium etli (strain CIAT 652)).